The sequence spans 593 residues: Metal-response element-binding transcription factor 2 (593 aa).

The disordered stretch occupies residues 1 to 35 (MRDSTGAGNSLVHKRSPLRRNQKTPTSLTKLSLQD). The segment covering 12 to 22 (VHKRSPLRRNQ) has biased composition (basic residues). Residues 23-32 (KTPTSLTKLS) show a composition bias toward polar residues. Phosphothreonine is present on Thr-24. The Tudor domain maps to 44–101 (CKFEEGQDVLARWSDGLFYLGTIKKINILKQSCFIIFEDSSKSWVLWKDIQTGATGSG). PHD-type zinc fingers lie at residues 102–157 (EMVC…CVFA) and 201–255 (QCYC…CSSG). Lys-360 participates in a covalent cross-link: Glycyl lysine isopeptide (Lys-Gly) (interchain with G-Cter in SUMO2). The span at 360-374 (KAEKEPEGTSHEFKI) shows a compositional bias: basic and acidic residues. Disordered regions lie at residues 360–411 (KAEK…PYTR) and 424–486 (KESI…TRTG). Positions 445–454 (TAHSSNTSDV) are enriched in polar residues. Ser-452 carries the phosphoserine modification. The segment covering 459–471 (ASSAKETTSSSIS) has biased composition (low complexity). A Glycyl lysine isopeptide (Lys-Gly) (interchain with G-Cter in SUMO2) cross-link involves residue Lys-522.

This sequence belongs to the Polycomblike family. In terms of assembly, associates with the PRC2 complex, which consists of the core components EED, EZH1 or EZH2, SUZ12, and RBBP4, and various combinations of accessory subunits including AEBP2, JARID2, PHF19, MTF2 and EPOP. Forms a dimeric PRC2.1 (class 1, PRC-PCL) complex consisting of at least SUZ12, RBBP4, and PHF19 or MTF2; PHF19 and MTF2 stabilize the dimeric structure which enhances PRC2 interaction with chromatin.

The protein resides in the nucleus. Its function is as follows. Polycomb group (PcG) protein that specifically binds histone H3 trimethylated at 'Lys-36' (H3K36me3) and recruits the PRC2 complex, thus enhancing PRC2 H3K27me3 methylation activity. Regulates the transcriptional networks during embryonic stem cell self-renewal and differentiation. Promotes recruitment of the PRC2 complex to the inactive X chromosome in differentiating XX ES cells and PRC2 recruitment to target genes in undifferentiated ES cells. Required to repress Hox genes by enhancing H3K27me3 methylation of the PRC2 complex. In some conditions may act as an inhibitor of PRC2 activity: able to activate the CDKN2A gene and promote cellular senescence by suppressing the catalytic activity of the PRC2 complex locally. Binds to the metal-regulating-element (MRE) of MT1A gene promoter. This Homo sapiens (Human) protein is Metal-response element-binding transcription factor 2 (MTF2).